The sequence spans 367 residues: Pectate trisaccharide-lyase (367 aa).

A signal peptide spans 1–27 (MLMRFSRVVSLVLLLVFTAVLTGAVKA). Residues Asp-144, Asp-166, and Asp-170 each contribute to the Ca(2+) site. Residues 151–173 (SHHIWIDHCTFVNGNDGAVDIKK) form a PbH1 1 repeat. Residue Arg-224 is part of the active site. A PbH1 2 repeat occupies 263–289 (GAKVHVEGNYFMGYGAVMAEAGIAFLP).

This sequence belongs to the polysaccharide lyase 1 family. Homotetramer. The cofactor is Ca(2+).

Its subcellular location is the secreted. The enzyme catalyses eliminative cleavage of unsaturated trigalacturonate as the major product from the reducing end of polygalacturonic acid/pectate.. Completely inactivated by EGTA. Cleaves unsaturated trigalacturonate from pectin. Activity is highest towards polygalacturonic acid, activity on methylated pectins decreases with an increasing degree of methylation. In Thermotoga maritima (strain ATCC 43589 / DSM 3109 / JCM 10099 / NBRC 100826 / MSB8), this protein is Pectate trisaccharide-lyase.